The primary structure comprises 176 residues: Oleosin Ara h 14.0101 (176 aa).

Ala-2 bears the N-acetylalanine; alternate mark. Transmembrane regions (helical) follow at residues 50 to 80 (IIAV…GLAI) and 95 to 117 (AVVT…LTGL). The interval 157-176 (TKDAGQQIQTKAQDVKRSSS) is disordered.

Belongs to the oleosin family. In terms of assembly, homodimer. Forms oligomers. As to expression, expressed in seeds (at protein level). Not expressed in leaves.

It localises to the lipid droplet. The protein resides in the membrane. May have a structural role to stabilize the lipid body during desiccation of the seed by preventing coalescence of the oil. Probably interacts with both lipid and phospholipid moieties of lipid bodies. May also provide recognition signals for specific lipase anchorage in lipolysis during seedling growth. The protein is Oleosin Ara h 14.0101 of Arachis hypogaea (Peanut).